A 157-amino-acid polypeptide reads, in one-letter code: Probable succinate transporter subunit YjjB (157 aa).

Helical transmembrane passes span 8-28 (FALA…AMVF), 50-70 (MILM…SMLV), 87-107 (VFTV…TAMI), and 129-149 (FLTA…PGLW).

The protein belongs to the ThrE exporter (TC 2.A.79) family. As to quaternary structure, the transporter is composed of YjjB and YjjP.

The protein localises to the cell inner membrane. Its function is as follows. Involved in succinate export with YjjP. Both proteins are required for export. This Escherichia coli (strain ATCC 8739 / DSM 1576 / NBRC 3972 / NCIMB 8545 / WDCM 00012 / Crooks) protein is Probable succinate transporter subunit YjjB.